Reading from the N-terminus, the 347-residue chain is Succinylglutamate desuccinylase (347 aa).

Zn(2+) contacts are provided by His64, Glu67, and His159. Residue Glu222 is part of the active site.

This sequence belongs to the AspA/AstE family. Succinylglutamate desuccinylase subfamily. Zn(2+) is required as a cofactor.

The enzyme catalyses N-succinyl-L-glutamate + H2O = L-glutamate + succinate. It participates in amino-acid degradation; L-arginine degradation via AST pathway; L-glutamate and succinate from L-arginine: step 5/5. Functionally, transforms N(2)-succinylglutamate into succinate and glutamate. In Burkholderia cenocepacia (strain ATCC BAA-245 / DSM 16553 / LMG 16656 / NCTC 13227 / J2315 / CF5610) (Burkholderia cepacia (strain J2315)), this protein is Succinylglutamate desuccinylase.